The primary structure comprises 505 residues: Alpha-internexin (505 aa).

The segment at 1–87 (MSFGSEHYLC…SQAAARTNEY (87 aa)) is head. A Phosphoserine modification is found at Ser-72. The tract at residues 88–129 (KIIRTNEKEQLQGLNDRFAVFIEKVHQLETQNRALEAELAAL) is coil 1A. An IF rod domain is found at 94–407 (EKEQLQGLND…KLLEGEETRF (314 aa)). A linker 1 region spans residues 130 to 142 (RQRHAEPSRVGEL). The tract at residues 143 to 238 (FQRELRELRA…QVHDEEVAEL (96 aa)) is coil 1B. Residue Ser-219 is modified to Phosphoserine. Residues 239–262 (LATLQASSQAAAEVDVAVAKPDLT) are linker 2. The segment at 263 to 408 (SALREIRAQY…LLEGEETRFS (146 aa)) is coil 2. Residue Lys-290 is modified to N6-acetyllysine. Phosphoserine is present on residues Ser-335, Ser-474, and Ser-502. A tail region spans residues 409 to 505 (TSGLSISGLN…EITTSSSQKM (97 aa)). A disordered region spans residues 438-505 (KVSSAGLSLK…EITTSSSQKM (68 aa)). Residues 495–505 (EEITTSSSQKM) are compositionally biased toward low complexity.

This sequence belongs to the intermediate filament family. As to quaternary structure, forms homodimers (in vitro). Forms heterodimers with NEFL, NEFM or NEFH (in vitro). In terms of processing, O-glycosylated. In terms of tissue distribution, expressed in the dorsal root ganglion neurons (at protein level).

Class-IV neuronal intermediate filament that is able to self-assemble. It is involved in the morphogenesis of neurons. It may form an independent structural network without the involvement of other neurofilaments or it may cooperate with NEFL to form the filamentous backbone to which NEFM and NEFH attach to form the cross-bridges. May also cooperate with the neuronal intermediate filament protein PRPH to form filamentous networks. This chain is Alpha-internexin (Ina), found in Rattus norvegicus (Rat).